The sequence spans 611 residues: Chaperone protein DnaK (611 aa).

Residue T173 is modified to Phosphothreonine; by autocatalysis. A compositionally biased stretch (low complexity) spans 577 to 592 (QAAAGQAEGAQGAQDA). Residues 577-611 (QAAAGQAEGAQGAQDAGTKKDNVVDAEFEEVKEDK) are disordered. Residues 600-611 (VDAEFEEVKEDK) are compositionally biased toward acidic residues.

Belongs to the heat shock protein 70 family.

In terms of biological role, acts as a chaperone. The chain is Chaperone protein DnaK from Bacillus cereus (strain G9842).